The sequence spans 977 residues: MDQGLSTGAHQDTDGLRERNTRVDSTVGREALTAVGEGEIKDKDGKASKTFGRTPDGTVFTVPQTHDMVSQLLLPSEPKNFGDLVVLILLAGHIMFLWALPAGAKIPIFAVTYLFWRLAYNAGIGWLLHNQSHHKTLIRWAEKTKVFVNPATGENPHPKLYNWIKRELETKIPQDYSFDNAPIEYNTWLVFRRLVDLILMCDFTSYCLFAIACGHQPVDESILMTVLRWSAGIVLVLFNLWVKLDAHRVVKDYAWYWGDFFYLIDQELTFDGVFEMAPHPMYSVGYAGYYGISLMAASYKVLFISIIAHAAQFAFLVLVENPHIDKTYNPPPPRKRSSTCADSSSTLPTDLDTPTAPTPSEDQTPNATYSYSVKPPQPVHNLLGLHNLDLYRTTDSSIMLVQLLVFSITALTPSTPWYQLLFVVLAAISRIWYSVGIGYILRNQSNTKSWTRHFVKYGDTPQEAWNQWKGTYHLSMILCYSSFIAAVWKMYTFPADWGYGLVLFRHVLGAGLISLQIWTSVSIYESLGEFGWFYGDFFFDDSPKLTYNGIYRFLNNPERVLGLAGVWGAVLITSSGAVTFLALLSHILSLAFIQFVERPHMQKLYGRSLRQDAGLVKSLKRSLPPSLKQLHGSVDKMFDDSFEFIEEMLDNARPKLAAGVNTFVKDTTALFQKYPARVTIARIDADLAGFDVRDYALSVEGTSALSFEESEKNKGREGANARMPLDRRGDLKDLTFEYGSPIRVKWTAPLHHSKKDWIGLYRVTDNTSREVTRVSSQGRWVATNEGAYDNLTCEKGILTSDVVIPSSERQGQDPCEFASGEIVFAGDKLFWTQGVFELRYHHNGMHNVMAISRPFEIRIRRSDEDETISDGDSFVESAVENALLPVVRNCFDRDPEIAPETVDEQFGTLVERDGKFAKRVVFAVHQMFGIELAAEVVKADGNVRNLAWRICNAKKVLAPYSMSRSNGTTTPLEESKE.

Residues 1 to 10 are compositionally biased toward polar residues; that stretch reads MDQGLSTGAH. A disordered region spans residues 1–23; sequence MDQGLSTGAHQDTDGLRERNTRV. Topologically, residues 1 to 83 are lumenal; sequence MDQGLSTGAH…LPSEPKNFGD (83 aa). Positions 11–22 are enriched in basic and acidic residues; it reads QDTDGLRERNTR. The helical transmembrane segment at 84-104 threads the bilayer; it reads LVVLILLAGHIMFLWALPAGA. Residues 105-107 lie on the Cytoplasmic side of the membrane; the sequence is KIP. The chain crosses the membrane as a helical span at residues 108–128; the sequence is IFAVTYLFWRLAYNAGIGWLL. Residues 129–193 are Lumenal-facing; sequence HNQSHHKTLI…EYNTWLVFRR (65 aa). Residues 194–214 traverse the membrane as a helical segment; it reads LVDLILMCDFTSYCLFAIACG. Residues 215–221 are Cytoplasmic-facing; sequence HQPVDES. The helical transmembrane segment at 222–242 threads the bilayer; it reads ILMTVLRWSAGIVLVLFNLWV. Over 243-275 the chain is Lumenal; the sequence is KLDAHRVVKDYAWYWGDFFYLIDQELTFDGVFE. The helical transmembrane segment at 276 to 296 threads the bilayer; sequence MAPHPMYSVGYAGYYGISLMA. Over 297-298 the chain is Cytoplasmic; the sequence is AS. The chain crosses the membrane as a helical span at residues 299 to 319; sequence YKVLFISIIAHAAQFAFLVLV. Residues 320 to 397 lie on the Lumenal side of the membrane; that stretch reads ENPHIDKTYN…LDLYRTTDSS (78 aa). Residues 328–370 are disordered; it reads YNPPPPRKRSSTCADSSSTLPTDLDTPTAPTPSEDQTPNATYS. Residues 341–360 are compositionally biased toward low complexity; that stretch reads ADSSSTLPTDLDTPTAPTPS. Residues 361-370 are compositionally biased toward polar residues; the sequence is EDQTPNATYS. Residues 398–418 traverse the membrane as a helical segment; sequence IMLVQLLVFSITALTPSTPWY. A topological domain (cytoplasmic) is located at residue glutamine 419. Residues 420–440 traverse the membrane as a helical segment; the sequence is LLFVVLAAISRIWYSVGIGYI. The Lumenal portion of the chain corresponds to 441-469; the sequence is LRNQSNTKSWTRHFVKYGDTPQEAWNQWK. The helical transmembrane segment at 470 to 492 threads the bilayer; sequence GTYHLSMILCYSSFIAAVWKMYT. Over 493–506 the chain is Cytoplasmic; that stretch reads FPADWGYGLVLFRH. A helical transmembrane segment spans residues 507-527; sequence VLGAGLISLQIWTSVSIYESL. Residues 528 to 575 are Lumenal-facing; sequence GEFGWFYGDFFFDDSPKLTYNGIYRFLNNPERVLGLAGVWGAVLITSS. The helical transmembrane segment at 576–596 threads the bilayer; the sequence is GAVTFLALLSHILSLAFIQFV. Residues 597 to 977 lie on the Cytoplasmic side of the membrane; sequence ERPHMQKLYG…TTTPLEESKE (381 aa).

The protein belongs to the class VI-like SAM-binding methyltransferase superfamily. CHO2 family.

Its subcellular location is the endoplasmic reticulum membrane. The enzyme catalyses a 1,2-diacyl-sn-glycero-3-phosphoethanolamine + S-adenosyl-L-methionine = a 1,2-diacyl-sn-glycero-3-phospho-N-methylethanolamine + S-adenosyl-L-homocysteine + H(+). Its pathway is phospholipid metabolism; phosphatidylcholine biosynthesis. Its function is as follows. Catalyzes the first step of the methylation pathway of phosphatidylcholine biosynthesis, the SAM-dependent methylation of phosphatidylethanolamine (PE) to phosphatidylmonomethylethanolamine (PMME). The protein is Phosphatidylethanolamine N-methyltransferase (cho2) of Penicillium rubens (strain ATCC 28089 / DSM 1075 / NRRL 1951 / Wisconsin 54-1255) (Penicillium chrysogenum).